Reading from the N-terminus, the 571-residue chain is Sulfite reductase [NADPH] hemoprotein beta-component (571 aa).

[4Fe-4S] cluster-binding residues include C436, C442, C481, and C485. Residue C485 participates in siroheme binding.

It belongs to the nitrite and sulfite reductase 4Fe-4S domain family. As to quaternary structure, alpha(8)-beta(8). The alpha component is a flavoprotein, the beta component is a hemoprotein. The cofactor is siroheme. Requires [4Fe-4S] cluster as cofactor.

The enzyme catalyses hydrogen sulfide + 3 NADP(+) + 3 H2O = sulfite + 3 NADPH + 4 H(+). It functions in the pathway sulfur metabolism; hydrogen sulfide biosynthesis; hydrogen sulfide from sulfite (NADPH route): step 1/1. Component of the sulfite reductase complex that catalyzes the 6-electron reduction of sulfite to sulfide. This is one of several activities required for the biosynthesis of L-cysteine from sulfate. This is Sulfite reductase [NADPH] hemoprotein beta-component from Anoxybacillus flavithermus (strain DSM 21510 / WK1).